Consider the following 863-residue polypeptide: DNA replication licensing factor mcm4 (863 aa).

The segment at methionine 1 to alanine 121 is disordered. Composition is skewed to polar residues over residues serine 54–glycine 64 and serine 78–valine 99. The C4-type zinc-finger motif lies at cysteine 306 to cysteine 331. The 210-residue stretch at isoleucine 458–valine 667 folds into the MCM domain. ATP-binding residues include tyrosine 471, arginine 497, lysine 516, serine 517, asparagine 618, arginine 643, arginine 732, and glutamate 735. Residues serine 642–aspartate 645 carry the Arginine finger motif.

It belongs to the MCM family. As to quaternary structure, component of the mcm2-7 complex (RLF-M). The complex forms a toroidal hexameric ring with the proposed subunit order mcm2-mcm6-mcm4-mcm7-mcm3-mcm5. The heterodimer of mmcm3/mcm5 interacts with mcm4, mmcm6, mcm7 and weakly with mcm2. Component of the CMG helicase complex, composed of the mcm2-7 complex, the GINS complex and cdc45. Hyperphosphorylated during mitosis in a mechanism requiring cdc2-cyclin B and other kinases. Undergoes dephosphorylation after exiting mitosis, existing in a partially phosphorylated state in the cytosolic interphase mcm complex which associates with the pre-replication complexes (pre-Rcs). Complete dephosphorylation inactivates the mcm complex, preventing its binding to chromatin. Becomes actively phosphorylated during S phase once the mcm complex is assembled on the chromatin. This chromatin-associated phosphorylation occurs during the activation of the pre-Rcs and is independent of cdks. Phosphorylated by the cdc7-dbf4b complex.

It is found in the nucleus. Its subcellular location is the chromosome. It carries out the reaction ATP + H2O = ADP + phosphate + H(+). In terms of biological role, acts as a component of the MCM2-7 complex (MCM complex) which is the replicative helicase essential for 'once per cell cycle' DNA replication initiation and elongation in eukaryotic cells. Core component of CDC45-MCM-GINS (CMG) helicase, the molecular machine that unwinds template DNA during replication, and around which the replisome is built. The active ATPase sites in the MCM2-7 ring are formed through the interaction surfaces of two neighboring subunits such that a critical structure of a conserved arginine finger motif is provided in trans relative to the ATP-binding site of the Walker A box of the adjacent subunit. The six ATPase active sites, however, are likely to contribute differentially to the complex helicase activity. The sequence is that of DNA replication licensing factor mcm4 from Xenopus tropicalis (Western clawed frog).